Here is a 327-residue protein sequence, read N- to C-terminus: DNA repair and recombination protein RadA (327 aa).

113-120 contacts ATP; that stretch reads GEFGSGKS.

It belongs to the eukaryotic RecA-like protein family.

Its function is as follows. Involved in DNA repair and in homologous recombination. Binds and assemble on single-stranded DNA to form a nucleoprotein filament. Hydrolyzes ATP in a ssDNA-dependent manner and promotes DNA strand exchange between homologous DNA molecules. The polypeptide is DNA repair and recombination protein RadA (Ignicoccus hospitalis (strain KIN4/I / DSM 18386 / JCM 14125)).